Here is a 73-residue protein sequence, read N- to C-terminus: Accessory secretory protein Asp5 (73 aa).

An N-terminal signal peptide occupies residues 1–30; it reads MQKLLLILTILLALILITLVISLPRENQQF. The helical transmembrane segment at 52 to 72 threads the bilayer; the sequence is IILLIVSILLFLTLIFYMIQT.

Part of the accessory SecA2/SecY2 protein translocation apparatus required to export cell wall protein GspB.

It localises to the cell membrane. Part of the accessory SecA2/SecY2 system specifically required to export GspB, a serine-rich repeat cell wall protein encoded upstream in the same operon. This is Accessory secretory protein Asp5 (asp5) from Streptococcus gordonii.